A 314-amino-acid chain; its full sequence is Oxidoreductase NAD-binding domain-containing protein 1 (314 aa).

The N-terminal stretch at 1-18 (MALVAGSAAYQVLRGVTG) is a signal peptide. Positions 63-166 (EIISPAKVCG…VGGEFCFDPQ (104 aa)) constitute an FAD-binding FR-type domain. 180–185 (GVGINP) provides a ligand contact to NAD(+).

This chain is Oxidoreductase NAD-binding domain-containing protein 1 (oxnad1), found in Xenopus laevis (African clawed frog).